Consider the following 166-residue polypeptide: Protein BioX (166 aa).

5 helical membrane passes run 12-32 (ISLL…TGIP), 33-53 (GSEF…FGFK), 55-75 (YFLA…HSIL), 87-107 (VGLI…AGPI), and 117-137 (AFTL…GMVI).

Its subcellular location is the cell membrane. Its function is as follows. Does not seem to be a permease of pimelate. Its role in biotin synthesis is not clear. The sequence is that of Protein BioX (bioX) from Lysinibacillus sphaericus (Bacillus sphaericus).